A 578-amino-acid chain; its full sequence is MGARCLALLLLYGTLLLLLLLPQLPLAGAATRYYTFNVKLQNVTRLCNTRAIPTVNGKFPGPKIVTREGDRVVVKVVNNIKDNITIHWHGVRQMRTGWSDGPAYVTQCPIQTGQSYVYNFTINGQRGTLFWHAHVSWLRSTLYGPIIILPKAGLPLPFTEPHKDVPIIFGEWFNADPEAIVAQALQTGGGPNVSDAYTINGLPGPLYNCSSKDTFRLKVQPGKMYLLRLINAALNDELFFSVANHTLTVVDVDASYVKPFDTDVVLITPGQTTNVLLRAKPTAEAAGATHLMMARPYATGRPGTYDNTTVAAVLEYAPPGHIKSLPLLRPSLPALNDTAFAAGFAAKLRSLACPDYPSNVPRRVDKPFFFAVGLGTTPCPGSNNQTCQGPTNTTKFTASINNVSFDMPTTALLQAHYTGQSAGVYTADFPASPLEPFNYTGTPPNNTNVSNGTRVVVLPYNASVEVVLQDTSILGAESHPLHLHGFDFFVVGQGTGNYDPSKHPAEFNLVDPVQRNTVGVPAGGWVAIRFFADNPGVWFMHCHLEVHTTWGLKMAWVVNDGPLPEQKLMPPPSDLPMC.

An N-terminal signal peptide occupies residues 1 to 29 (MGARCLALLLLYGTLLLLLLLPQLPLAGA). 2 Plastocyanin-like domains span residues 37–153 (NVKL…PKAG) and 163–319 (KDVP…YAPP). Residues asparagine 42 and asparagine 83 are each glycosylated (N-linked (GlcNAc...) asparagine). Residues histidine 87 and histidine 89 each coordinate Cu cation. Asparagine 119 carries an N-linked (GlcNAc...) asparagine glycan. Cu cation-binding residues include histidine 132 and histidine 134. N-linked (GlcNAc...) asparagine glycans are attached at residues asparagine 192, asparagine 208, asparagine 244, asparagine 307, asparagine 336, asparagine 384, asparagine 392, asparagine 402, asparagine 438, asparagine 445, asparagine 448, asparagine 451, and asparagine 461. The Plastocyanin-like 3 domain maps to 428-562 (DFPASPLEPF…KMAWVVNDGP (135 aa)). Residues histidine 479, histidine 482, histidine 484, histidine 541, cysteine 542, histidine 543, and histidine 547 each contribute to the Cu cation site.

It belongs to the multicopper oxidase family. Cu cation is required as a cofactor.

The protein resides in the secreted. Its subcellular location is the extracellular space. The protein localises to the apoplast. It catalyses the reaction 4 hydroquinone + O2 = 4 benzosemiquinone + 2 H2O. Its function is as follows. Lignin degradation and detoxification of lignin-derived products. This Oryza sativa subsp. japonica (Rice) protein is Laccase-10 (LAC10).